Here is a 201-residue protein sequence, read N- to C-terminus: Small ribosomal subunit protein uS4c (201 aa).

A disordered region spans residues 15 to 43 (LGALPGLTNKRPRAGSDLRNQSRSGKRSQ). Residues 89–149 (MRLDNILFRL…DEQKSIALIQ (61 aa)) enclose the S4 RNA-binding domain.

As to quaternary structure, component of the chloroplast small ribosomal subunit (SSU). Mature 70S chloroplast ribosomes of higher plants consist of a small (30S) and a large (50S) subunit. The 30S small subunit contains 1 molecule of ribosomal RNA (16S rRNA) and 24 different proteins. The 50S large subunit contains 3 rRNA molecules (23S, 5S and 4.5S rRNA) and 33 different proteins.

It is found in the plastid. The protein resides in the chloroplast. Its function is as follows. Component of the chloroplast ribosome (chloro-ribosome), a dedicated translation machinery responsible for the synthesis of chloroplast genome-encoded proteins, including proteins of the transcription and translation machinery and components of the photosynthetic apparatus. In Spinacia oleracea (Spinach), this protein is Small ribosomal subunit protein uS4c (rps4).